Reading from the N-terminus, the 922-residue chain is Histidine kinase 5 (922 aa).

Coiled coils occupy residues 86 to 120 (MQDN…EEYK) and 169 to 205 (KQKA…SQSA). One can recognise a Histidine kinase domain in the interval 373–614 (TMSHEIRSPL…TFTFILPYKV (242 aa)). H376 is modified (phosphohistidine; by autocatalysis). Disordered stretches follow at residues 620–639 (YSDD…EPDD) and 728–773 (NGRC…TEVK). The segment covering 738–747 (SCSSSQASSE) has biased composition (low complexity). The span at 761–773 (SHREEEKAETEVK) shows a compositional bias: basic and acidic residues. Residues 779 to 921 (KILLVEDNKI…KLRECLQQYL (143 aa)) form the Response regulatory domain. 3 residues coordinate Mg(2+): D785, D828, and C830. D828 bears the 4-aspartylphosphate mark.

In terms of assembly, interacts with AHP1, APH2, APH3, APH5 and APH6, but not with APH4. In terms of tissue distribution, present in light-grown but not in etiolated seedlings. Mostly expressed in roots flowers and siliques, and, to a lower extent, in stems and leaves, especially in guard cells.

The protein resides in the cell membrane. It localises to the cytoplasm. The catalysed reaction is ATP + protein L-histidine = ADP + protein N-phospho-L-histidine.. Functionally, functions as a histidine kinase and transmits the stress signal to a downstream MAPK cascade. This protein undergoes an ATP-dependent autophosphorylation at a conserved histidine residue in the kinase core, and a phosphoryl group is then transferred to a conserved aspartate residue in the receiver domain. Negative regulator of the ETR1-dependent abscisic acid (ABA) and ethylene signaling pathway that inhibits the root elongation. Promotes stomatal closure. Regulates stomatal opening by integrating multiple signals via hydrogen peroxide H(2)O(2) homeostasis in guard cells in an ABA-independent manner. May contribute to basal defense mechanisms by closing stomata in the presence of bacterial pathogens. Regulates both hormone levels and ROS production in response to stress. Required for full immunity to bacterial pathogen and necrotrophic fungus. In Arabidopsis thaliana (Mouse-ear cress), this protein is Histidine kinase 5 (AHK5).